The primary structure comprises 484 residues: tRNA-2-methylthio-N(6)-dimethylallyladenosine synthase (484 aa).

Residues 29-149 (GVFHIHTLGC…LPKLLDQNRA (121 aa)) enclose the MTTase N-terminal domain. Cysteine 38, cysteine 78, cysteine 112, cysteine 186, cysteine 190, and cysteine 193 together coordinate [4Fe-4S] cluster. The Radical SAM core domain maps to 172-401 (RASRISSWVA…VALQEQITEE (230 aa)). Residues 404-474 (ATFEGRDVEV…RHNLLADPDV (71 aa)) enclose the TRAM domain.

The protein belongs to the methylthiotransferase family. MiaB subfamily. As to quaternary structure, monomer. Requires [4Fe-4S] cluster as cofactor.

It localises to the cytoplasm. It catalyses the reaction N(6)-dimethylallyladenosine(37) in tRNA + (sulfur carrier)-SH + AH2 + 2 S-adenosyl-L-methionine = 2-methylsulfanyl-N(6)-dimethylallyladenosine(37) in tRNA + (sulfur carrier)-H + 5'-deoxyadenosine + L-methionine + A + S-adenosyl-L-homocysteine + 2 H(+). In terms of biological role, catalyzes the methylthiolation of N6-(dimethylallyl)adenosine (i(6)A), leading to the formation of 2-methylthio-N6-(dimethylallyl)adenosine (ms(2)i(6)A) at position 37 in tRNAs that read codons beginning with uridine. This chain is tRNA-2-methylthio-N(6)-dimethylallyladenosine synthase, found in Bifidobacterium longum subsp. infantis (strain ATCC 15697 / DSM 20088 / JCM 1222 / NCTC 11817 / S12).